We begin with the raw amino-acid sequence, 147 residues long: Peroxynitrite isomerase (147 aa).

Residue His137 coordinates heme b.

The protein belongs to the nitrobindin family. In terms of assembly, homodimer. It depends on heme b as a cofactor.

The catalysed reaction is peroxynitrite = nitrate. It functions in the pathway nitrogen metabolism. Its function is as follows. Heme-binding protein able to scavenge peroxynitrite and to protect free L-tyrosine against peroxynitrite-mediated nitration, by acting as a peroxynitrite isomerase that converts peroxynitrite to nitrate. Therefore, this protein likely plays a role in peroxynitrite sensing and in the detoxification of reactive nitrogen and oxygen species (RNS and ROS, respectively). Is able to bind nitric oxide (NO) in vitro, but may act as a sensor of peroxynitrite levels in vivo. This Frankia alni (strain DSM 45986 / CECT 9034 / ACN14a) protein is Peroxynitrite isomerase.